We begin with the raw amino-acid sequence, 261 residues long: Secreted RxLR effector protein 154 (261 aa).

A signal peptide spans 1-18 (MRRCALLFRLFLISYSCS). The RxLR-dEER motif lies at 49-64 (RILQADDPEHIRTEER).

This sequence belongs to the RxLR effector family.

The protein localises to the secreted. It localises to the host cell membrane. In terms of biological role, secreted effector that completely suppresses the host cell death induced by cell death-inducing proteins. This Plasmopara viticola (Downy mildew of grapevine) protein is Secreted RxLR effector protein 154.